We begin with the raw amino-acid sequence, 245 residues long: MAPK-interacting and spindle-stabilizing protein-like (245 aa).

The segment at 1-245 (MSDEFSLADA…PMPGGPHSYH (245 aa)) is disordered. An N-acetylserine modification is found at S2. 3 positions are modified to phosphoserine: S2, S6, and S15. The span at 17–26 (AKTSAVSNTK) shows a compositional bias: polar residues. Residues 34-51 (WPGSNPWNNPSAPSSVPS) show a composition bias toward low complexity. 3 stretches are compositionally biased toward pro residues: residues 74-127 (SVPP…PELP), 164-190 (PNMPYPSPGPYPAPPPPQAPGAAPPVP), and 198-207 (AWGPPAPYPA).

This sequence belongs to the MISS family.

The protein is MAPK-interacting and spindle-stabilizing protein-like (MAPK1IP1L) of Homo sapiens (Human).